The primary structure comprises 153 residues: Glutamyl-tRNA(Gln) amidotransferase subunit C, mitochondrial (153 aa).

A disordered region spans residues 31–55 (HPTKVPQQPEPNAFPDLDNNTDDDP).

The protein belongs to the GatC family. As to quaternary structure, subunit of the heterotrimeric GatCAB amidotransferase (AdT) complex, composed of A, B and C subunits.

It is found in the mitochondrion. It catalyses the reaction L-glutamyl-tRNA(Gln) + L-glutamine + ATP + H2O = L-glutaminyl-tRNA(Gln) + L-glutamate + ADP + phosphate + H(+). Allows the formation of correctly charged Gln-tRNA(Gln) through the transamidation of misacylated Glu-tRNA(Gln) in the mitochondria. The reaction takes place in the presence of glutamine and ATP through an activated gamma-phospho-Glu-tRNA(Gln). The polypeptide is Glutamyl-tRNA(Gln) amidotransferase subunit C, mitochondrial (Drosophila willistoni (Fruit fly)).